Here is a 496-residue protein sequence, read N- to C-terminus: Neuronal acetylcholine receptor subunit beta-4 (496 aa).

The signal sequence occupies residues 1–19; that stretch reads MRSALPLVLFSLVALCGRG. At 20 to 236 the chain is on the extracellular side; it reads DCRVANAEEK…IIKRKPLFYT (217 aa). Residues N36, N93, N138, and N166 are each glycosylated (N-linked (GlcNAc...) asparagine). C153 and C167 form a disulfide bridge. The helical transmembrane segment at 237–257 threads the bilayer; sequence INLIIPCVLITSLAILVFYLP. The Cytoplasmic segment spans residues 258-265; sequence SDCGEKMT. E262 contacts Na(+). A helical transmembrane segment spans residues 266-286; the sequence is LCISVLLALTVFLLLISKIVP. Over 287–298 the chain is Extracellular; it reads PTSLNVPLIGKY. Residues 299–319 traverse the membrane as a helical segment; sequence LMFTMVLVTFSIVTSVCVLNV. The Cytoplasmic portion of the chain corresponds to 320 to 464; the sequence is HHRSPSTHTM…WKYVAMVVDR (145 aa). The helical transmembrane segment at 465–485 threads the bilayer; sequence LFLWVFVVVCVLGTVGLFLPP. Residues 486–496 lie on the Extracellular side of the membrane; it reads LFQTHTPSEEP.

The protein belongs to the ligand-gated ion channel (TC 1.A.9) family. Acetylcholine receptor (TC 1.A.9.1) subfamily. Beta-4/CHRNB4 sub-subfamily. As to quaternary structure, neuronal AChR is composed of two different types of subunits: alpha and beta. CHRNB4/Beta-4 subunit can be combined to CHRNA2/alpha-2, CHRNA3/alpha-3 or CHRNA4/alpha-4, CHRNA5/alpha-5 and CHRNB3/beta-3 to give rise to functional receptors. Forms stoichiometries such as (CHRNA3)2:(CHRNB4)3 or (CHRNA3:CHRNB4)2:CHRNB3. Interacts with RIC3; which is required for proper folding and assembly. Interacts with LYPD6.

It localises to the synaptic cell membrane. Its subcellular location is the cell membrane. It carries out the reaction Ca(2+)(in) = Ca(2+)(out). The catalysed reaction is K(+)(in) = K(+)(out). It catalyses the reaction Na(+)(in) = Na(+)(out). Functionally, component of neuronal acetylcholine receptors (nAChRs) that function as pentameric, ligand-gated cation channels with high calcium permeability among other activities. nAChRs are excitatory neurotrasnmitter receptors formed by a collection of nAChR subunits known to mediate synaptic transmission in the nervous system and the neuromuscular junction. Each nAchR subunit confers differential attributes to channel properties, including activation, deactivation and desensitization kinetics, pH sensitivity, cation permeability, and binding to allosteric modulators. CHRNB4 forms heteropentameric neuronal acetylcholine receptors with CHRNA2, CHRNA3 and CHRNA4, as well as CHRNA5 and CHRNB3 as accesory subunits. CHRNA3:CHRNB4 being predominant in neurons of the autonomic ganglia, it is known as ganglionic nicotinic receptor. CHRNA3:CHRNB4 or CHRNA3:CHRNA5:CHRNB4 play also an important role in the habenulo-interpeduncular tract, modulating the mesolimbic dopamine system and affecting reward circuits and addiction. Hypothalamic CHRNA3:CHRNB4 nAChR activation by nicotine leads to activation of POMC neurons and a decrease in food intake. The chain is Neuronal acetylcholine receptor subunit beta-4 (CHRNB4) from Bos taurus (Bovine).